A 448-amino-acid chain; its full sequence is Trigger factor (448 aa).

A PPIase FKBP-type domain is found at 162–243 (DDFAIIDIEA…VQQTKERKLP (82 aa)). The disordered stretch occupies residues 426-448 (DEGKAVDPSEYFGEEEESAEESE). The segment covering 437–448 (FGEEEESAEESE) has biased composition (acidic residues).

It belongs to the FKBP-type PPIase family. Tig subfamily.

The protein resides in the cytoplasm. The catalysed reaction is [protein]-peptidylproline (omega=180) = [protein]-peptidylproline (omega=0). Involved in protein export. Acts as a chaperone by maintaining the newly synthesized protein in an open conformation. Functions as a peptidyl-prolyl cis-trans isomerase. The sequence is that of Trigger factor from Corynebacterium diphtheriae (strain ATCC 700971 / NCTC 13129 / Biotype gravis).